We begin with the raw amino-acid sequence, 290 residues long: ATP synthase gamma chain (290 aa).

Belongs to the ATPase gamma chain family. In terms of assembly, F-type ATPases have 2 components, CF(1) - the catalytic core - and CF(0) - the membrane proton channel. CF(1) has five subunits: alpha(3), beta(3), gamma(1), delta(1), epsilon(1). CF(0) has three main subunits: a, b and c.

It localises to the cell membrane. Functionally, produces ATP from ADP in the presence of a proton gradient across the membrane. The gamma chain is believed to be important in regulating ATPase activity and the flow of protons through the CF(0) complex. This chain is ATP synthase gamma chain, found in Heliobacterium modesticaldum (strain ATCC 51547 / Ice1).